Reading from the N-terminus, the 506-residue chain is Sodium-coupled neutral amino acid symporter 2 (506 aa).

The disordered stretch occupies residues 1–23; that stretch reads MKKAEMGRFSISPDEDSSSYSSN. The Cytoplasmic segment spans residues 1–76; the sequence is MKKAEMGRFS…HPGTTSFGMS (76 aa). The regulates protein turnover upon amino acid deprivation stretch occupies residues 1-96; that stretch reads MKKAEMGRFS…SGILGLSYAM (96 aa). Phosphoserine occurs at positions 10, 12, 21, 22, and 55. A helical transmembrane segment spans residues 77-96; the sequence is VFNLSNAIVGSGILGLSYAM. Residue Asn82 coordinates Na(+). Topologically, residues 97-102 are extracellular; sequence ANTGIA. Residues 103 to 123 traverse the membrane as a helical segment; the sequence is LFIILLTFVSIFSLYSVHLLL. Residues 124-158 lie on the Cytoplasmic side of the membrane; it reads KTANEGGSLLYEQLGYKAFGLVGKLAASGSITMQN. A helical transmembrane segment spans residues 159–177; the sequence is IGAMSSYLFIVKYELPLVI. Over 178-188 the chain is Extracellular; sequence QALTNIEDKTG. The chain crosses the membrane as a helical span at residues 189–209; it reads LWYLNGNYLVLLVSLVVILPL. Topologically, residues 210 to 217 are cytoplasmic; it reads SLFRNLGY. Residues 218–238 form a helical membrane-spanning segment; the sequence is LGYTSGLSLLCMVFFLIVVIC. Over 239–292 the chain is Extracellular; the sequence is KKFQVPCPVEAALIINETINTTLTQPTALVPALSHNVTENDSCRPHYFIFNSQT. Cys245 and Cys281 form a disulfide bridge. 2 N-linked (GlcNAc...) asparagine glycosylation sites follow: Asn258 and Asn274. Residues 293–313 form a helical membrane-spanning segment; that stretch reads VYAVPILIFSFVCHPAVLPIY. At 314-329 the chain is on the cytoplasmic side; that stretch reads EELKDRSRRRMMNVSK. Residues 330 to 350 form a helical membrane-spanning segment; that stretch reads ISFFAMFLMYLLAALFGYLTF. The Extracellular segment spans residues 351–371; the sequence is YEHVESELLHTYSSILGTDIL. Residues 372 to 392 traverse the membrane as a helical segment; that stretch reads LLIVRLAVLMAVTLTVPVVIF. Residue Thr386 coordinates Na(+). Residues 393 to 413 are Cytoplasmic-facing; that stretch reads PIRSSVTHLLCASKDFSWWRH. The chain crosses the membrane as a helical span at residues 414-434; it reads SLITVSILAFTNLLVIFVPTI. At 435–436 the chain is on the extracellular side; sequence RD. A helical transmembrane segment spans residues 437–457; it reads IFGFIGASAASMLIFILPSAF. Over 458–472 the chain is Cytoplasmic; that stretch reads YIKLVKKEPMKSVQK. Residues 473 to 495 form a helical membrane-spanning segment; the sequence is IGALFFLLSGVLVMTGSMALIVL. The Extracellular segment spans residues 496 to 506; that stretch reads DWVHNAPGGGH.

The protein belongs to the amino acid/polyamine transporter 2 family. Polyubiquitination by NEDD4L regulates the degradation and the activity of SLC38A2. In terms of tissue distribution, ubiquitously expressed. Expressed in neocortex. Widely expressed in the central nervous system with higher concentrations in caudal regions. Expressed by glutamatergic and GABAergic neurons together with astrocytes and other non-neuronal cells in the cerebral cortex (at protein level).

The protein resides in the cell membrane. It carries out the reaction L-alanine(in) + Na(+)(in) = L-alanine(out) + Na(+)(out). It catalyses the reaction glycine(in) + Na(+)(in) = glycine(out) + Na(+)(out). The enzyme catalyses L-serine(in) + Na(+)(in) = L-serine(out) + Na(+)(out). The catalysed reaction is L-proline(in) + Na(+)(in) = L-proline(out) + Na(+)(out). It carries out the reaction L-methionine(in) + Na(+)(in) = L-methionine(out) + Na(+)(out). It catalyses the reaction L-histidine(in) + Na(+)(in) = L-histidine(out) + Na(+)(out). The enzyme catalyses L-asparagine(in) + Na(+)(in) = L-asparagine(out) + Na(+)(out). The catalysed reaction is L-glutamine(in) + Na(+)(in) = L-glutamine(out) + Na(+)(out). It carries out the reaction L-threonine(in) + Na(+)(in) = L-threonine(out) + Na(+)(out). It catalyses the reaction L-leucine(in) + Na(+)(in) = L-leucine(out) + Na(+)(out). The enzyme catalyses L-phenylalanine(in) + Na(+)(in) = L-phenylalanine(out) + Na(+)(out). Its activity is regulated as follows. Inhibited by N-methyl-D-glucamine. Inhibited by choline. Allosteric regulation of sodium ions binding by pH. In terms of biological role, symporter that cotransports neutral amino acids and sodium ions from the extracellular to the intracellular side of the cell membrane. The transport is pH-sensitive, Li(+)-intolerant, electrogenic, driven by the Na(+) electrochemical gradient and cotransports of neutral amino acids and sodium ions with a stoichiometry of 1:1. May function in the transport of amino acids at the blood-brain barrier. May function in the transport of amino acids in the supply of maternal nutrients to the fetus through the placenta. Maintains a key metabolic glutamine/glutamate balance underpinning retrograde signaling by dendritic release of the neurotransmitter glutamate. Transports L-proline in differentiating osteoblasts for the efficient synthesis of proline-enriched proteins and provides proline essential for osteoblast differentiation and bone formation during bone development. This is Sodium-coupled neutral amino acid symporter 2 from Homo sapiens (Human).